The sequence spans 127 residues: Major sperm protein 38 (127 aa).

At Ala-2 the chain carries N-acetylalanine. Positions 9–126 (DIQTQPGTKI…RRKNLPIEYN (118 aa)) constitute an MSP domain.

Sperm.

It is found in the cell projection. The protein resides in the pseudopodium. It localises to the cytoplasm. Its subcellular location is the cytoskeleton. Functionally, central component in molecular interactions underlying sperm crawling. Forms an extensive filament system that extends from sperm villipoda, along the leading edge of the pseudopod. This chain is Major sperm protein 38 (msp-38), found in Caenorhabditis elegans.